A 315-amino-acid polypeptide reads, in one-letter code: Glycine--tRNA ligase alpha subunit (315 aa).

This sequence belongs to the class-II aminoacyl-tRNA synthetase family. In terms of assembly, tetramer of two alpha and two beta subunits.

The protein resides in the cytoplasm. It catalyses the reaction tRNA(Gly) + glycine + ATP = glycyl-tRNA(Gly) + AMP + diphosphate. The polypeptide is Glycine--tRNA ligase alpha subunit (Pseudomonas putida (strain GB-1)).